The chain runs to 56 residues: Alpha-conotoxin TxIA (56 aa).

Positions 1 to 16 (MFTVFLLVVLATAVVS) are cleaved as a signal peptide. A propeptide spanning residues 17-39 (FTSDRASDDGKAAASDLITLTIK) is cleaved from the precursor. 2 disulfide bridges follow: Cys41-Cys47 and Cys42-Cys55. Residues 43–45 (SRP) form a ser-Xaa-Pro motif, crucial for potent interaction with nAChR region. 4-hydroxyproline; partial occurs at positions 45 and 46. The residue at position 55 (Cys55) is a Cysteine amide.

Belongs to the conotoxin A superfamily. In terms of processing, exists in 4 different forms, depending on hydroxylations. Tx1a-PP does not contain hydroxyproline, tx1a-OP has one hydroxyproline at position 45, tx1a-PO has one hydroxyproline at position 46, and tx1a-PP has two hydroxyprolines at positions 45 and 46. In terms of tissue distribution, expressed by the venom duct. Tx1a that containing 1 or 2 non-hydroxylated prolines are mostly present in part 5 of the venom duct (distal part near the pharynx), whereas tx1a-OO (with 2 hydroxyprolines) is mostly present in part 4 of the venom duct (follewed by part 3).

Its subcellular location is the secreted. Functionally, alpha-conotoxins act on postsynaptic membranes, they bind to the nicotinic acetylcholine receptors (nAChR) and thus inhibit them. This toxin inhibits rat alpha-3-beta-2/CHRNA3-CHRNB2 (IC(50)=3.5 nM), rat alpha-7/CHRNA7 (IC(50)=392 nM) nAChR, and the L.stagnalis soluble acetylcholine receptor (all tested without hydroxyproline). The chain is Alpha-conotoxin TxIA from Conus textile (Cloth-of-gold cone).